A 414-amino-acid polypeptide reads, in one-letter code: Esterase FrsA (414 aa).

The protein belongs to the FrsA family.

It carries out the reaction a carboxylic ester + H2O = an alcohol + a carboxylate + H(+). Catalyzes the hydrolysis of esters. This chain is Esterase FrsA, found in Citrobacter koseri (strain ATCC BAA-895 / CDC 4225-83 / SGSC4696).